Here is a 79-residue protein sequence, read N- to C-terminus: Calcium/calmodulin-dependent protein kinase II inhibitor 2 (79 aa).

The tract at residues 1-21 (MSEILPYSEDKMGRFGADPEG) is disordered. An inhibitory domain region spans residues 43–69 (KRPPKLGQIGRAKRVVIEDDRIDDVLK).

It belongs to the CAMK2N family. As to quaternary structure, interacts with CAMK2A and CAMK2B in the presence of Ca(2+)/calmodulin or after autophosphorylation.

The protein resides in the nucleus. It localises to the cytoplasm. It is found in the cytosol. Its subcellular location is the synapse. Functionally, potent and specific cellular inhibitor of CaM-kinase II (CAMK2). Traps Ca(2+)/calmodulin on CAMK2. The chain is Calcium/calmodulin-dependent protein kinase II inhibitor 2 (CAMK2N2) from Bos taurus (Bovine).